We begin with the raw amino-acid sequence, 369 residues long: Polycomb group protein FERTILIZATION-INDEPENDENT ENDOSPERM (369 aa).

WD repeat units lie at residues 31–73, 81–123, 126–166, 172–212, 238–275, 287–328, and 335–368; these read EGKK…AISA, DKEE…IHKS, GHGD…CILI, GHRY…TYVE, IHTNYVDCNRWFGDFILSKSVDNEILLWEPQLKENSPG, VPMC…PVLI, and QSKSVIRQTAMSVDGSTILACCEDGTIWRWDVIT.

This sequence belongs to the WD repeat ESC family. In terms of assembly, interacts directly with MEA. These two proteins are probably indirectly associated with FIS2. In plants, PcG complexes are probably composed of a member of the EZ family (CLF or MEA), FIE, and a member of the VEFS family (FIS2, VRN2 or EMF2). Component of the plant homeodomain / polycomb repressive complex 2 (PHD-PRC2) large complex during prolonged cold, composed of core PRC2 components (VRN2, EZA1, FIE and MSI1), and three related PHD finger proteins (VIL1, VIL2 and VIN3) that mediates histone H3 trimethylation on 'Lys-27' (H3K27me3). Binds to ALP1. As to expression, expressed in cauline leaves, root and stems. In the male reproductive organ, it is expressed in the developing anther; and is abundant in microspore mother cells, in microsporocytes and in the tapetum, but is absent from vascular bundles, the connective tissue and the filament. It is also absent from pollen grains at subsequent developmental stages. In the developing female reproductive organs, it is highly expressed in all cells of the young ovules primordium before archesporial differentiation. Then, it is highly expressed in the ovule sporophytic tissue and the megaspore mother cell before meiosis, but is absent from placenta or the developing carpel. Then, it decreases.

It localises to the nucleus. Polycomb group (PcG) protein. PcG proteins act by forming multiprotein complexes, which are required to maintain the transcriptionally repressive state of homeotic genes throughout development. PcG proteins are not required to initiate repression, but to maintain it during later stages of development. They probably act via the methylation of histones, rendering chromatin heritably changed in its expressibility. Required to prevent the proliferation of the central cell by repressing unknown target genes before fertilization. Probably also involved in floral repression mechanism established during early plant development. Regulates the anteroposterior organization of the endosperm. Interacts with the promoter and represses the transcription of genes such as PHE1, that are paternally active and maternally silenced. The polypeptide is Polycomb group protein FERTILIZATION-INDEPENDENT ENDOSPERM (FIE) (Arabidopsis thaliana (Mouse-ear cress)).